Here is a 1045-residue protein sequence, read N- to C-terminus: DNA polymerase (1045 aa).

Positions 331-355 (IKENEESDSESDNDDEEDKKENDGA) are disordered. Positions 335–348 (EESDSESDNDDEED) are enriched in acidic residues.

The protein belongs to the DNA polymerase type-B family.

The catalysed reaction is DNA(n) + a 2'-deoxyribonucleoside 5'-triphosphate = DNA(n+1) + diphosphate. This is DNA polymerase (dpo) from Phaeocystis pouchetii (PpV01).